The following is a 195-amino-acid chain: Cysteine/O-acetylserine efflux protein (195 aa).

At Met-1–Phe-9 the chain is on the periplasmic side. A helical membrane pass occupies residues Trp-10–Thr-32. Topologically, residues Ala-33 to Met-46 are cytoplasmic. The helical transmembrane segment at Ser-47 to Ile-67 threads the bilayer. At Asp-68–Pro-69 the chain is on the periplasmic side. A helical transmembrane segment spans residues Ala-70–Ile-90. Topologically, residues Ala-91 to Pro-104 are cytoplasmic. The helical transmembrane segment at Val-105–Ile-125 threads the bilayer. The Periplasmic portion of the chain corresponds to Thr-126–Trp-141. The helical transmembrane segment at Val-142–Leu-162 threads the bilayer. At Ala-163 to Arg-176 the chain is on the cytoplasmic side. A helical membrane pass occupies residues Gln-177 to Phe-194. Position 195 (Tyr-195) is a topological domain, periplasmic.

Belongs to the Rht family.

It is found in the cell inner membrane. It catalyses the reaction O-acetyl-L-serine(in) = O-acetyl-L-serine(out). The enzyme catalyses L-cysteine(in) = L-cysteine(out). In terms of biological role, exporter of O-acetylserine (OAS) and cysteine. This chain is Cysteine/O-acetylserine efflux protein (eamB), found in Salmonella choleraesuis (strain SC-B67).